The chain runs to 308 residues: Glycine--tRNA ligase alpha subunit (308 aa).

This sequence belongs to the class-II aminoacyl-tRNA synthetase family. As to quaternary structure, tetramer of two alpha and two beta subunits.

The protein resides in the cytoplasm. The enzyme catalyses tRNA(Gly) + glycine + ATP = glycyl-tRNA(Gly) + AMP + diphosphate. This Brevibacillus brevis (strain 47 / JCM 6285 / NBRC 100599) protein is Glycine--tRNA ligase alpha subunit.